The primary structure comprises 268 residues: MAGREIGGGDRRWSLRGMTALVTGGTRGIGYAIVEELANFGAEVYTCSRSQNDLDECLEKWRRKGFKVSGPVCDVSSISQRQTLMESVTSSFNGKLNILINNAGTTIPKEATNFTAEDYSIIMGTNFEASYNLCQLAHPLLKASGNASIVFNSSAAGVIAVPLSSIYAASKGAINQVTKSLACEWAKDSIRVNAVAPWIINTPIIEAACQVPSQKKNIESLIGRAPMKRAGEPSEVSSLVTYLCLPTASYITGQIICVDGGYTVNGFI.

21–45 (LVTGGTRGIGYAIVEELANFGAEVY) contributes to the NADP(+) binding site. A substrate-binding site is contributed by S154. The active-site Proton acceptor is Y167.

Belongs to the short-chain dehydrogenases/reductases (SDR) family.

The chain is Tropinone reductase homolog from Datura stramonium (Jimsonweed).